The sequence spans 809 residues: Valine--tRNA ligase (809 aa).

Residues 60-70 carry the 'HIGH' region motif; sequence PFTSGELHMGH. The short motif at 546–550 is the 'KMSKS' region element; that stretch reads RMSKS. Lys549 serves as a coordination point for ATP.

The protein belongs to the class-I aminoacyl-tRNA synthetase family. ValS type 2 subfamily.

The protein localises to the cytoplasm. The enzyme catalyses tRNA(Val) + L-valine + ATP = L-valyl-tRNA(Val) + AMP + diphosphate. In terms of biological role, catalyzes the attachment of valine to tRNA(Val). As ValRS can inadvertently accommodate and process structurally similar amino acids such as threonine, to avoid such errors, it has a 'posttransfer' editing activity that hydrolyzes mischarged Thr-tRNA(Val) in a tRNA-dependent manner. This chain is Valine--tRNA ligase, found in Sulfurisphaera tokodaii (strain DSM 16993 / JCM 10545 / NBRC 100140 / 7) (Sulfolobus tokodaii).